The following is a 674-amino-acid chain: Nucleoporin NDC1 (674 aa).

The Cytoplasmic segment spans residues 1–24 (MATAVSRPCAGRSRDILWRVLGWR). Residues 25–45 (IVASIVWSVLFLPICTTVFII) traverse the membrane as a helical segment. Topologically, residues 46 to 68 (FSRIDLFHPIQWLSDSFSDLYSS) are perinuclear space. A helical membrane pass occupies residues 69–89 (YVIFYFLLLSVVIIIISIFNV). The Cytoplasmic portion of the chain corresponds to 90–114 (EFYAVVPSIPCSRLALIGKIIHPQQ). Residues 115–135 (LMHSFIHAAMGMVMAWCAAVI) traverse the membrane as a helical segment. Over 136–165 (TQGQYSFLVVPCTGTNSFGSPAAQTCLNEY) the chain is Perinuclear space. Residues 166-186 (HLFFLLTGAFMGYSYSLLYFV) traverse the membrane as a helical segment. Over 187-225 (NNMNYLPFPIIQQYKFLRFRRSLLLLVKHSCVESLFLVR) the chain is Cytoplasmic. Residues 226–246 (NFCILYYFLGYIPKAWISTAM) form a helical membrane-spanning segment. Residues 247–272 (NLHIDEQVHRPLDTVSGLLNLSLLYH) lie on the Perinuclear space side of the membrane. A helical membrane pass occupies residues 273-293 (VWLCGVFLLTTWYVSWILFKI). The Cytoplasmic portion of the chain corresponds to 294-674 (YATEAHVFPV…RLQQFLEFKE (381 aa)). A disordered region spans residues 394–425 (SSSYPVEPKKLNSPEETAFQTPKSSQMPRPSV). Phosphoserine is present on Ser-406. Residues 407–421 (PEETAFQTPKSSQMP) show a composition bias toward polar residues. Residue Thr-414 is modified to Phosphothreonine. Residue Ser-439 is modified to Phosphoserine. A Phosphothreonine modification is found at Thr-440. Ser-445 carries the post-translational modification Phosphoserine. Position 449 is a phosphothreonine (Thr-449). Phosphoserine occurs at positions 471 and 474.

The protein belongs to the NDC1 family. Interacts with the NUP35/NUP53. Interacts with AAAS, anchoring it to the nuclear envelope.

It is found in the nucleus. It localises to the nuclear pore complex. The protein resides in the nucleus membrane. Component of the nuclear pore complex (NPC), which plays a key role in de novo assembly and insertion of NPC in the nuclear envelope. Required for NPC and nuclear envelope assembly, possibly by forming a link between the nuclear envelope membrane and soluble nucleoporins, thereby anchoring the NPC in the membrane. The chain is Nucleoporin NDC1 (NDC1) from Homo sapiens (Human).